The sequence spans 901 residues: HTH-type transcriptional regulator MalT (901 aa).

Serine 39–threonine 46 contributes to the ATP binding site. The HTH luxR-type domain maps to glutamate 829–leucine 894. The segment at residues asparagine 853–arginine 872 is a DNA-binding region (H-T-H motif).

Belongs to the MalT family. Monomer in solution. Oligomerizes to an active state in the presence of the positive effectors ATP and maltotriose.

Activated by ATP and maltotriose, which are both required for DNA binding. In terms of biological role, positively regulates the transcription of the maltose regulon whose gene products are responsible for uptake and catabolism of malto-oligosaccharides. Specifically binds to the promoter region of its target genes, recognizing a short DNA motif called the MalT box. The polypeptide is HTH-type transcriptional regulator MalT (Klebsiella pneumoniae (strain 342)).